Here is an 888-residue protein sequence, read N- to C-terminus: Prodigiosin synthesizing transferase PigC (888 aa).

The protein belongs to the PigC family.

It participates in antibiotic biosynthesis; prodigiosin biosynthesis. In terms of biological role, involved in the biosynthesis of 2-methyl-3-n-amyl-pyrrole (MAP), one of the terminal products involved in the biosynthesis of the red antibiotic prodigiosin (Pig). Catalyzes the transfer of 2-methyl-3-n-amyl-pyrrole (MAP) to 4-methoxy-2,2'-bipyrrole-5-carbaldehyde (MBC) to yield prodigiosin. It is able to use substrates with a variety of monocyclic rings in place of the pyrrolic ring A of its natural substrate. The sequence is that of Prodigiosin synthesizing transferase PigC from Serratia marcescens.